We begin with the raw amino-acid sequence, 371 residues long: Chorismate synthase (371 aa).

Residues arginine 48 and arginine 54 each coordinate NADP(+). FMN contacts are provided by residues arginine 125–serine 127, asparagine 238–alanine 239, glycine 278, lysine 293–serine 297, and arginine 319.

Belongs to the chorismate synthase family. In terms of assembly, homotetramer. FMNH2 serves as cofactor.

The enzyme catalyses 5-O-(1-carboxyvinyl)-3-phosphoshikimate = chorismate + phosphate. The protein operates within metabolic intermediate biosynthesis; chorismate biosynthesis; chorismate from D-erythrose 4-phosphate and phosphoenolpyruvate: step 7/7. Functionally, catalyzes the anti-1,4-elimination of the C-3 phosphate and the C-6 proR hydrogen from 5-enolpyruvylshikimate-3-phosphate (EPSP) to yield chorismate, which is the branch point compound that serves as the starting substrate for the three terminal pathways of aromatic amino acid biosynthesis. This reaction introduces a second double bond into the aromatic ring system. The chain is Chorismate synthase from Polynucleobacter asymbioticus (strain DSM 18221 / CIP 109841 / QLW-P1DMWA-1) (Polynucleobacter necessarius subsp. asymbioticus).